The primary structure comprises 362 residues: Histidinol-phosphate aminotransferase (362 aa).

Position 218 is an N6-(pyridoxal phosphate)lysine (Lys218).

The protein belongs to the class-II pyridoxal-phosphate-dependent aminotransferase family. Histidinol-phosphate aminotransferase subfamily. In terms of assembly, homodimer. Requires pyridoxal 5'-phosphate as cofactor.

It carries out the reaction L-histidinol phosphate + 2-oxoglutarate = 3-(imidazol-4-yl)-2-oxopropyl phosphate + L-glutamate. The protein operates within amino-acid biosynthesis; L-histidine biosynthesis; L-histidine from 5-phospho-alpha-D-ribose 1-diphosphate: step 7/9. This is Histidinol-phosphate aminotransferase from Xanthomonas campestris pv. campestris (strain B100).